Consider the following 88-residue polypeptide: Large ribosomal subunit protein bL27 (88 aa).

It belongs to the bacterial ribosomal protein bL27 family.

The sequence is that of Large ribosomal subunit protein bL27 from Mycolicibacterium smegmatis (strain ATCC 700084 / mc(2)155) (Mycobacterium smegmatis).